The following is a 210-amino-acid chain: Na(+)-translocating NADH-quinone reductase subunit D (210 aa).

Helical transmembrane passes span 14 to 34, 42 to 62, 72 to 92, 103 to 123, 131 to 151, and 178 to 198; these read PIVN…ALAV, LVMA…ISLI, IIVQ…LLQA, VFVG…AYAM, FMDG…VGFV, and NGML…IWII.

It belongs to the NqrDE/RnfAE family. Composed of six subunits; NqrA, NqrB, NqrC, NqrD, NqrE and NqrF.

Its subcellular location is the cell inner membrane. The enzyme catalyses a ubiquinone + n Na(+)(in) + NADH + H(+) = a ubiquinol + n Na(+)(out) + NAD(+). Its function is as follows. NQR complex catalyzes the reduction of ubiquinone-1 to ubiquinol by two successive reactions, coupled with the transport of Na(+) ions from the cytoplasm to the periplasm. NqrA to NqrE are probably involved in the second step, the conversion of ubisemiquinone to ubiquinol. The sequence is that of Na(+)-translocating NADH-quinone reductase subunit D from Shewanella putrefaciens (strain CN-32 / ATCC BAA-453).